The following is a 480-amino-acid chain: Coronin-2B (480 aa).

7 WD repeats span residues 29-77 (HCFD…GRIE), 78-127 (PNYP…RNMT), 128-170 (EALL…LDVG), 171-212 (EPVK…PRSG), 213-259 (RVLQ…EDLS), 260-305 (MPLI…TEKP), and 306-345 (YLSY…KLVT). Residues 436–479 (NELLRMFFRQQDEIRRLKEELAQKDIRIRQLQLELKNLRNSPKN) are a coiled coil.

Belongs to the WD repeat coronin family. Binds to F-actin and to vinculin. In terms of tissue distribution, expressed predominantly in brain.

The protein resides in the cytoplasm. Its subcellular location is the cytoskeleton. May play a role in the reorganization of neuronal actin structure. The chain is Coronin-2B (CORO2B) from Homo sapiens (Human).